The chain runs to 551 residues: TRAF3-interacting JNK-activating modulator (551 aa).

At 1–526 (MISPDPRPSP…QLPPRRQCGR (526 aa)) the chain is on the cytoplasmic side. 2 disordered regions span residues 73–95 (LEEK…RPGQ) and 140–178 (DHLS…IKND). Coiled-coil stretches lie at residues 240 to 436 (DKLK…LLTK) and 464 to 506 (WDLR…RKLQ). The helical; Anchor for type IV membrane protein transmembrane segment at 527–544 (WLPVLMVVIAAALAVFLA) threads the bilayer. The Extracellular portion of the chain corresponds to 545–551 (NKDNLMI).

Interacts (via its coiled-coil domain) with TRAF3 (via isoleucine zipper). Interacts with MAP2K1. Interacts with PPP2CA; this interaction targets PPP2CA to the lysosomes. Interacts with TLR4. Interacts with MAVS. Interacts with TBK1.

The protein resides in the cell membrane. Its subcellular location is the golgi apparatus membrane. It is found in the lysosome membrane. The protein localises to the mitochondrion outer membrane. In terms of biological role, adapter protein that plays essential roles in both innate and adaptive immunity. Plays a crucial role in the regulation of thymocyte development. Mechanistically, mediates TCR-stimulated activation through recruiting MAP2K1/MEK1 to the Golgi and, thereby, facilitating the interaction of MAP2K1/MEK1 with its activator BRAF. Also plays an essential role in regulatory T-cell stability and function by recruiting the serine-threonine phosphatase catalytic subunit (PPP2CA) to the lysosome, thereby facilitating the interaction of PP2Ac with the mTORC1 component RPTOR and restricting glycolytic metabolism. Positively regulates TLR4 signaling activity in macrophage-mediated inflammation by acting as a molecular clamp to facilitate LPS-induced translocation of TLR4 to lipid rafts. In response to viral infection, facilitates the recruitment of TRAF3 to MAVS within mitochondria leading to IRF3 activation and interferon production. However, participates in the maintenance of immune homeostasis and the prevention of overzealous innate immunity by promoting 'Lys-48'-dependent ubiquitination of TBK1. In Homo sapiens (Human), this protein is TRAF3-interacting JNK-activating modulator (TRAF3IP3).